Here is a 684-residue protein sequence, read N- to C-terminus: Phenoloxidase 1 (684 aa).

Positions 1–50 (MSDKNKLLLLFDRPLETVIVPRGPDQEAFDVPVDLLSDRYKAIGVQVSNR) are cleaved as a propeptide — removed by PPAF1. The N-linked (GlcNAc...) asparagine glycan is linked to Asn80. Residues His208, His212, and His237 each contribute to the Cu cation site. Glu349 serves as the catalytic Proton acceptor. N-linked (GlcNAc...) asparagine glycans are attached at residues Asn352 and Asn356. Cu cation is bound by residues His364, His368, and His404. 3 N-linked (GlcNAc...) asparagine glycosylation sites follow: Asn486, Asn491, and Asn545. 2 cysteine pairs are disulfide-bonded: Cys579-Cys621 and Cys581-Cys628.

The protein belongs to the tyrosinase family. Dimer. Might form a homodimer or a heterodimer with PPO1. Might interact with PPAF2 (via CLIP domain); the interaction might be required for PPO1 activity. Cu(2+) serves as cofactor. Propeptide cleaved by PPAF1. As to expression, hemocytes.

It is found in the secreted. In terms of biological role, this is a copper-containing oxidase that functions in the formation of pigments such as melanins and other polyphenolic compounds. Catalyzes the oxidation of o-diphenols (N-acetyldopamine, 4-methylcatechol and dopamine). Cannot oxidize monophenols and p-phenols (L-tyrosine, tyramine, gentisic acid and hydroquinone). Binds to the surface of hemocytes and is involved in hemocyte melanization. Activation of the enzyme in response to bacterial lipopolysaccharides (LPS) suggests it may play a role in innate immunity. This chain is Phenoloxidase 1, found in Holotrichia diomphalia (Korean black chafer).